Consider the following 323-residue polypeptide: Leukocyte surface antigen CD47 (323 aa).

The signal sequence occupies residues 1-18; sequence MWPLVAALLLGSACCGSA. The residue at position 19 (glutamine 19) is a Pyrrolidone carboxylic acid. The region spanning 19-127 is the Ig-like V-type domain; sequence QLLFNKTKSV…ELTREGETII (109 aa). The Extracellular segment spans residues 19–141; the sequence is QLLFNKTKSV…RVVSWFSPNE (123 aa). N-linked (GlcNAc...) asparagine glycosylation is found at asparagine 23, asparagine 34, asparagine 50, and asparagine 73. 2 disulfide bridges follow: cysteine 33/cysteine 263 and cysteine 41/cysteine 114. Serine 89 bears the Phosphoserine mark. Asparagine 111 carries an N-linked (GlcNAc...) asparagine glycan. A helical membrane pass occupies residues 142–162; that stretch reads NILIVIFPIFAILLFWGQFGI. At 163-176 the chain is on the cytoplasmic side; it reads KTLKYRSGGMDEKT. The chain crosses the membrane as a helical span at residues 177–197; the sequence is IALLVAGLVITVIVIVGAILF. Topologically, residues 198–207 are extracellular; it reads VPGEYSLKNA. Residue asparagine 206 is glycosylated (N-linked (GlcNAc...) asparagine). The chain crosses the membrane as a helical span at residues 208 to 228; that stretch reads TGLGLIVTSTGILILLHYYVF. At 229-235 the chain is on the cytoplasmic side; the sequence is STAIGLT. The chain crosses the membrane as a helical span at residues 236 to 256; that stretch reads SFVIAILVIQVIAYILAVVGL. Residues 257-268 lie on the Extracellular side of the membrane; that stretch reads SLCIAACIPMHG. Residues 269–289 traverse the membrane as a helical segment; the sequence is PLLISGLSILALAQLLGLVYM. Residues 290–323 are Cytoplasmic-facing; the sequence is KFVASNQKTIQPPRKAVEEPLNAFKESKGMMNDE.

As to quaternary structure, monomer. Interacts with THBS1 (via the C-terminal domain). Interacts with SIRPA. Interacts with FAS/CD95; interaction may be enhanced by functional activation. Interacts with SIRPG, UBQLN1 and UBQLN2. May interact with fibrinogen. Interacts with Aedes aegypti neutrophil-stimulating factor 1; the interaction results in inhibition of phagocytosis activity of macrophages. As to expression, very broadly distributed on normal adult tissues, as well as ovarian tumors, being especially abundant in some epithelia and the brain. Macrophages.

Its subcellular location is the cell membrane. Its function is as follows. Adhesive protein that mediates cell-to-cell interactions. Acts as a receptor for thrombospondin THBS1 and as modulator of integrin signaling through the activation of heterotrimeric G proteins. Involved in signal transduction, cardiovascular homeostasis, inflammation, apoptosis, angiogenesis, cellular self-renewal, and immunoregulation. Plays a role in modulating pulmonary endothelin EDN1 signaling. Modulates nitrous oxide (NO) signaling, in response to THBS1, hence playing a role as a pressor agent, supporting blood pressure. Plays an important role in memory formation and synaptic plasticity in the hippocampus. Receptor for SIRPA, binding to which prevents maturation of immature dendritic cells and inhibits cytokine production by mature dendritic cells. Interaction with SIRPG mediates cell-cell adhesion, enhances superantigen-dependent T-cell-mediated proliferation and costimulates T-cell activation. Positively modulates FAS-dependent apoptosis in T-cells, perhaps by enhancing FAS clustering. Plays a role in suppressing angiogenesis and may be involved in metabolic dysregulation during normal aging. In response to THBS1, negatively modulates wound healing. Inhibits stem cell self-renewal, in response to THBS1, probably by regulation of the stem cell transcription factors POU5F1/OCT4, SOX2, MYC/c-Myc and KLF4. May play a role in membrane transport and/or integrin dependent signal transduction. May prevent premature elimination of red blood cells. This is Leukocyte surface antigen CD47 (CD47) from Homo sapiens (Human).